A 603-amino-acid polypeptide reads, in one-letter code: Chaperone protein DnaK (603 aa).

Position 175 is a phosphothreonine; by autocatalysis (Thr-175). Residues 573–586 show a composition bias toward low complexity; it reads AQQAQQQNPDNQNN. The interval 573-603 is disordered; that stretch reads AQQAQQQNPDNQNNNKDDVTEATVTDDSTKK. Positions 594–603 are enriched in polar residues; sequence ATVTDDSTKK.

This sequence belongs to the heat shock protein 70 family.

Acts as a chaperone. This chain is Chaperone protein DnaK, found in Ureaplasma parvum serovar 3 (strain ATCC 27815 / 27 / NCTC 11736).